The primary structure comprises 287 residues: Orotidine 5'-phosphate decarboxylase (287 aa).

Lysine 95 acts as the Proton donor in catalysis.

It belongs to the OMP decarboxylase family. Type 2 subfamily.

The catalysed reaction is orotidine 5'-phosphate + H(+) = UMP + CO2. Its pathway is pyrimidine metabolism; UMP biosynthesis via de novo pathway; UMP from orotate: step 2/2. This Albidiferax ferrireducens (strain ATCC BAA-621 / DSM 15236 / T118) (Rhodoferax ferrireducens) protein is Orotidine 5'-phosphate decarboxylase.